Reading from the N-terminus, the 337-residue chain is Anthranilate phosphoribosyltransferase (337 aa).

Residues Gly79, 82-83 (GD), Thr87, 89-92 (NVST), 107-115 (KHGNRSVSS), and Ser119 contribute to the 5-phospho-alpha-D-ribose 1-diphosphate site. An anthranilate-binding site is contributed by Gly79. Ser91 lines the Mg(2+) pocket. Anthranilate is bound at residue Asn110. Arg165 lines the anthranilate pocket. The Mg(2+) site is built by Asp223 and Glu224.

This sequence belongs to the anthranilate phosphoribosyltransferase family. In terms of assembly, homodimer. Mg(2+) is required as a cofactor.

It catalyses the reaction N-(5-phospho-beta-D-ribosyl)anthranilate + diphosphate = 5-phospho-alpha-D-ribose 1-diphosphate + anthranilate. The protein operates within amino-acid biosynthesis; L-tryptophan biosynthesis; L-tryptophan from chorismate: step 2/5. Its function is as follows. Catalyzes the transfer of the phosphoribosyl group of 5-phosphorylribose-1-pyrophosphate (PRPP) to anthranilate to yield N-(5'-phosphoribosyl)-anthranilate (PRA). The protein is Anthranilate phosphoribosyltransferase of Aeromonas salmonicida (strain A449).